We begin with the raw amino-acid sequence, 123 residues long: Large ribosomal subunit protein bL12 (123 aa).

This sequence belongs to the bacterial ribosomal protein bL12 family. Homodimer. Part of the ribosomal stalk of the 50S ribosomal subunit. Forms a multimeric L10(L12)X complex, where L10 forms an elongated spine to which 2 to 4 L12 dimers bind in a sequential fashion. Binds GTP-bound translation factors.

Forms part of the ribosomal stalk which helps the ribosome interact with GTP-bound translation factors. Is thus essential for accurate translation. This is Large ribosomal subunit protein bL12 from Clostridium botulinum (strain ATCC 19397 / Type A).